Here is a 458-residue protein sequence, read N- to C-terminus: Alpha-2C adrenergic receptor (458 aa).

Residues 1-51 (MASPALAAALAAAAAEGPNGSDAGEWGSGGGANASGTDWGPPPGQYSAGAV) lie on the Extracellular side of the membrane. Residues Asn19 and Asn33 are each glycosylated (N-linked (GlcNAc...) asparagine). Residues 52–76 (AGLAAVVGFLIVFTVVGNVLVVIAV) form a helical membrane-spanning segment. The Cytoplasmic portion of the chain corresponds to 77-88 (LTSRALRAPQNL). The helical transmembrane segment at 89–114 (FLVSLASADILVATLVMPFSLANELM) threads the bilayer. Residues 115-124 (AYWYFGQVWC) lie on the Extracellular side of the membrane. Cys124 and Cys202 are oxidised to a cystine. The helical transmembrane segment at 125–147 (GVYLALDVLFCTSSIVHLCAISL) threads the bilayer. The Cytoplasmic portion of the chain corresponds to 148 to 168 (DRYWSVTQAVEYNLKRTPRRV). Residues 169-191 (KATIVAVWLISAVISFPPLVSFY) traverse the membrane as a helical segment. Residues 192–207 (RRPDGAAYPQCGLNDE) are Extracellular-facing. The chain crosses the membrane as a helical span at residues 208 to 231 (TWYILSSCIGSFFAPCLIMGLVYA). Topologically, residues 232–379 (RIYRVAKLRT…QAREKRFTFV (148 aa)) are cytoplasmic. Positions 245–343 (SEKRGPAGPD…SPGPGGRLSR (99 aa)) are disordered. Residues 291–303 (RRRRRGALRRGGR) show a composition bias toward basic residues. A helical membrane pass occupies residues 380-403 (LAVVMGVFVLCWFPFFFSYSLYGI). Over 404 to 416 (CREACQLPEPLFK) the chain is Extracellular. The chain crosses the membrane as a helical span at residues 417 to 437 (FFFWIGYCNSSLNPVIYTVFN). Over 438-458 (QDFRRSFKHILFRRRRRGFRQ) the chain is Cytoplasmic.

Belongs to the G-protein coupled receptor 1 family. Adrenergic receptor subfamily. ADRA2C sub-subfamily.

The protein resides in the cell membrane. Its function is as follows. Alpha-2 adrenergic receptors mediate the catecholamine-induced inhibition of adenylate cyclase through the action of G proteins. This Rattus norvegicus (Rat) protein is Alpha-2C adrenergic receptor (Adra2c).